Consider the following 166-residue polypeptide: Phosphopantetheine adenylyltransferase (166 aa).

Ser-11 lines the substrate pocket. ATP contacts are provided by residues 11–12 (SF) and His-19. Substrate is bound by residues Lys-43, Ala-76, and Arg-90. ATP-binding positions include 91-93 (GLR), Glu-101, and 126-132 (YRYFSSS).

This sequence belongs to the bacterial CoaD family. As to quaternary structure, homohexamer. Mg(2+) serves as cofactor.

Its subcellular location is the cytoplasm. It catalyses the reaction (R)-4'-phosphopantetheine + ATP + H(+) = 3'-dephospho-CoA + diphosphate. It participates in cofactor biosynthesis; coenzyme A biosynthesis; CoA from (R)-pantothenate: step 4/5. In terms of biological role, reversibly transfers an adenylyl group from ATP to 4'-phosphopantetheine, yielding dephospho-CoA (dPCoA) and pyrophosphate. In Streptococcus mutans serotype c (strain ATCC 700610 / UA159), this protein is Phosphopantetheine adenylyltransferase.